We begin with the raw amino-acid sequence, 269 residues long: GTP cyclohydrolase FolE2 (269 aa).

The protein belongs to the GTP cyclohydrolase IV family.

The enzyme catalyses GTP + H2O = 7,8-dihydroneopterin 3'-triphosphate + formate + H(+). Its pathway is cofactor biosynthesis; 7,8-dihydroneopterin triphosphate biosynthesis; 7,8-dihydroneopterin triphosphate from GTP: step 1/1. In terms of biological role, converts GTP to 7,8-dihydroneopterin triphosphate. This Burkholderia thailandensis (strain ATCC 700388 / DSM 13276 / CCUG 48851 / CIP 106301 / E264) protein is GTP cyclohydrolase FolE2.